The chain runs to 643 residues: Fructose-1,6-bisphosphatase class 3 (643 aa).

This sequence belongs to the FBPase class 3 family. Mn(2+) is required as a cofactor.

It catalyses the reaction beta-D-fructose 1,6-bisphosphate + H2O = beta-D-fructose 6-phosphate + phosphate. It functions in the pathway carbohydrate biosynthesis; gluconeogenesis. The chain is Fructose-1,6-bisphosphatase class 3 from Streptococcus agalactiae serotype Ia (strain ATCC 27591 / A909 / CDC SS700).